The following is a 1325-amino-acid chain: MSPHISPSKDTPSQRLPIPLSLPTHLGLLAKAYGVPPASILQLAWGLVLRCYFTTSSSRWGTIDMAHEYKEKKNLPIRCEVLELDDTRSIGWILQNWNDPSVHRHLPAEEDTSNVPVSAGSIVILTEDAKDLEVLRDFELTAEWIICFSTSTEKPLLRLSWRPDVIHSELASHLAQLLERALDTTFLSPDIPLSQINLFSILDHQKLLQWNHQYPQSVNRLVHEMFEDMVAARPQATAVAAWDGEVTYQQLDRLSTRLAIKLQTIDLQPESIVALCFEKSVWAIVAMLGVLRAGGAFLHIDPKHPTARQQAMISTTAARIILCSEQTRDTVSRFDSESLSLVVDRKMFAQEPDHKQVALPSPNNLGPRNAAYIVCTSGSTGLPKAIVVEHVSLCTSVTAQAEAMAVGGESRILQYAAYTFDVSVGDVFTALTHGACVCIPSDWERTQDLVGAINRLDVNQACLTSTVASFLTPMNVPKLQKLTLGGEPASKQCIDLWSGKVALKNVYGPAECTVWCVIQKNASSEIPASNIGRGIGARTWIVHPENHNQLMPIGAVGELLIEGPLVARGYLNDAERTTAVFLERAPSWLATFGPLPPQTRFYKTGDLARFEQNGTLFFEGRKDTQVKLRGQRIELGEIEYQIQQACNPVPPLAVELIETKDLQAPLLGAFITWTGGLEISLDQSAVPNGLGPDLDARSHFNELVSRIQANIDRTLPPYMMPGLYIPVQKLPLSTSGKLDRKVLRQYCTQHTRSFLTASEAESSDVIADDATKDDVALHEIVNPGEITLAQLWAHALGRRMESINAKDNFLSLGGDSLAAMRLVNLAARDAQVTLTVANIFESPVLADQARLLRPLSKTKSLAPFELMTRGEASIEDIVGFAAQQCRLLPAQIEDVYPCTPLQEEMMRDSLSNDRTQMGQEVVQISEELDLVRYQVACASVYRRFPILRTRFIEHSGRLVQVVVREDLCWKQPTSLAEYKALDSRERPALGKPLTRWALTSDGTHFILSLHHAMFDGITLGQIQGAIYAVYQCIPLPPPSVSFATFLAHLDDQNAPLSQESQRFWQSYLCPSASLDASITPETQKIDRPRASCGTQRLVQFTSGEVSALQRHGLTEATLVRGAWACTLARHQQKPHASAFSDVIFGTMLTGRNFHLPGVDMLAAPSLTHVPIRIRIDEGDLNGHSARALLARVQADATAMIPYEHDGMNRIRSIEVQTRAVFNRIRTLLVIQPIPEGLTSVSTSPFPGSIVSGPRVEAKEMGHFHWYGLLVECTLLPTKGFFVRVSYDNKMFGTEQVESLLDDYSTTLHTLANGLMDTDIPASLHV.

Residues Y248 to Q644 are adenylation. The Carrier domain maps to E779 to S856. At S816 the chain carries O-(pantetheine 4'-phosphoryl)serine. Positions E893 to L1310 are condensation.

It belongs to the NRP synthetase family. Pantetheine 4'-phosphate serves as cofactor.

It functions in the pathway antifungal biosynthesis. In terms of biological role, nonribosomal peptide synthetase; part of the gene cluster that mediates the biosynthesis of the tetrahydropyranyl antifungal agent lanomycin that acts as an inhibitor of CYP51 and blocks the ergosterol biosynthesis. The biosynthesis probably begins with the formation of an hexaketide, followed by methionine mediated alkylation of C-2 and C-6, and methylation of the reduced C-3 oxygen, pyran forming reductive ring closure, oxygenation of C-4, beta-keto reduction, enoyl reduction and dehydration of the remaining oxygens, and finally, acylation with glycine to complete the biosynthesis. The chain is Nonribosomal peptide synthetase from Pyrenophora dematioidea (Helminthosporium dematioideum).